A 353-amino-acid polypeptide reads, in one-letter code: Protein RecA (353 aa).

68 to 75 contributes to the ATP binding site; that stretch reads GPESSGKT.

This sequence belongs to the RecA family.

It localises to the cytoplasm. In terms of biological role, can catalyze the hydrolysis of ATP in the presence of single-stranded DNA, the ATP-dependent uptake of single-stranded DNA by duplex DNA, and the ATP-dependent hybridization of homologous single-stranded DNAs. It interacts with LexA causing its activation and leading to its autocatalytic cleavage. In Roseiflexus sp. (strain RS-1), this protein is Protein RecA.